A 361-amino-acid chain; its full sequence is Alternative oxidase, mitochondrial (361 aa).

A helical transmembrane segment spans residues 155–175; the sequence is LIRYVFLESVAGVPGMVAGML. 3 residues coordinate Fe cation: Glu162, Glu201, and His204. The chain crosses the membrane as a helical span at residues 221–241; sequence MILGAQGVFFNSFFLCYLFSP. 4 residues coordinate Fe cation: Glu252, Glu253, Glu309, and His312. Residues 320–361 are disordered; sequence GNLKQDEDPNPFVSEYGKERGEKPGKGIESLKPVGWERDEVI. Over residues 335–345 the composition is skewed to basic and acidic residues; sequence YGKERGEKPGK.

Belongs to the alternative oxidase family. Fe cation is required as a cofactor.

The protein localises to the mitochondrion inner membrane. Catalyzes cyanide-resistant oxygen consumption. May increase respiration when the cytochrome respiratory pathway is restricted, or in response to low temperatures. This chain is Alternative oxidase, mitochondrial (aox), found in Botryotinia fuckeliana (Noble rot fungus).